A 487-amino-acid chain; its full sequence is Glutamyl-tRNA(Gln) amidotransferase subunit A (487 aa).

Catalysis depends on charge relay system residues lysine 77 and serine 152. Serine 176 functions as the Acyl-ester intermediate in the catalytic mechanism.

This sequence belongs to the amidase family. GatA subfamily. As to quaternary structure, heterotrimer of A, B and C subunits.

It catalyses the reaction L-glutamyl-tRNA(Gln) + L-glutamine + ATP + H2O = L-glutaminyl-tRNA(Gln) + L-glutamate + ADP + phosphate + H(+). Its function is as follows. Allows the formation of correctly charged Gln-tRNA(Gln) through the transamidation of misacylated Glu-tRNA(Gln) in organisms which lack glutaminyl-tRNA synthetase. The reaction takes place in the presence of glutamine and ATP through an activated gamma-phospho-Glu-tRNA(Gln). This chain is Glutamyl-tRNA(Gln) amidotransferase subunit A, found in Lysinibacillus sphaericus (strain C3-41).